The chain runs to 268 residues: Hydroxyethylthiazole kinase (268 aa).

Met-45 provides a ligand contact to substrate. Arg-121 and Thr-167 together coordinate ATP. Gly-194 provides a ligand contact to substrate.

This sequence belongs to the Thz kinase family. Mg(2+) serves as cofactor.

The enzyme catalyses 5-(2-hydroxyethyl)-4-methylthiazole + ATP = 4-methyl-5-(2-phosphooxyethyl)-thiazole + ADP + H(+). It participates in cofactor biosynthesis; thiamine diphosphate biosynthesis; 4-methyl-5-(2-phosphoethyl)-thiazole from 5-(2-hydroxyethyl)-4-methylthiazole: step 1/1. Its function is as follows. Catalyzes the phosphorylation of the hydroxyl group of 4-methyl-5-beta-hydroxyethylthiazole (THZ). The sequence is that of Hydroxyethylthiazole kinase from Bacillus anthracis (strain A0248).